The chain runs to 122 residues: Small ribosomal subunit protein uS13c (122 aa).

Belongs to the universal ribosomal protein uS13 family. Part of the 30S ribosomal subunit.

Its subcellular location is the plastid. The protein resides in the chloroplast. Functionally, located at the top of the head of the 30S subunit, it contacts several helices of the 16S rRNA. This chain is Small ribosomal subunit protein uS13c, found in Cyanidium caldarium (Red alga).